Reading from the N-terminus, the 335-residue chain is Tryptophan--tRNA ligase (335 aa).

ATP contacts are provided by residues 13 to 15 (QPS) and 21 to 22 (GN). The 'HIGH' region motif lies at 14-22 (PSGELTIGN). Asp-138 provides a ligand contact to L-tryptophan. ATP-binding positions include 150-152 (GKD), Ile-189, and 198-202 (KMSKS). A 'KMSKS' region motif is present at residues 198–202 (KMSKS).

The protein belongs to the class-I aminoacyl-tRNA synthetase family. In terms of assembly, homodimer.

Its subcellular location is the cytoplasm. The catalysed reaction is tRNA(Trp) + L-tryptophan + ATP = L-tryptophyl-tRNA(Trp) + AMP + diphosphate + H(+). Catalyzes the attachment of tryptophan to tRNA(Trp). The protein is Tryptophan--tRNA ligase of Clostridium acetobutylicum (strain ATCC 824 / DSM 792 / JCM 1419 / IAM 19013 / LMG 5710 / NBRC 13948 / NRRL B-527 / VKM B-1787 / 2291 / W).